We begin with the raw amino-acid sequence, 196 residues long: Imidazole glycerol phosphate synthase subunit HisH (196 aa).

The Glutamine amidotransferase type-1 domain occupies 2 to 196 (NIVIIDTNCS…QQLVKNFLEI (195 aa)). The Nucleophile role is filled by C77. Catalysis depends on residues H178 and E180.

As to quaternary structure, heterodimer of HisH and HisF.

The protein localises to the cytoplasm. The enzyme catalyses 5-[(5-phospho-1-deoxy-D-ribulos-1-ylimino)methylamino]-1-(5-phospho-beta-D-ribosyl)imidazole-4-carboxamide + L-glutamine = D-erythro-1-(imidazol-4-yl)glycerol 3-phosphate + 5-amino-1-(5-phospho-beta-D-ribosyl)imidazole-4-carboxamide + L-glutamate + H(+). The catalysed reaction is L-glutamine + H2O = L-glutamate + NH4(+). Its pathway is amino-acid biosynthesis; L-histidine biosynthesis; L-histidine from 5-phospho-alpha-D-ribose 1-diphosphate: step 5/9. Functionally, IGPS catalyzes the conversion of PRFAR and glutamine to IGP, AICAR and glutamate. The HisH subunit catalyzes the hydrolysis of glutamine to glutamate and ammonia as part of the synthesis of IGP and AICAR. The resulting ammonia molecule is channeled to the active site of HisF. The chain is Imidazole glycerol phosphate synthase subunit HisH from Blochmanniella pennsylvanica (strain BPEN).